Here is a 339-residue protein sequence, read N- to C-terminus: RNA polymerase II holoenzyme cyclin-like subunit (339 aa).

Residues Pro48–Arg67 are disordered. The segment covering Asn49 to Asn60 has biased composition (low complexity). Residues Arg93–Ile194 enclose the Cyclin N-terminal domain.

It belongs to the cyclin family. Cyclin C subfamily. In terms of assembly, component of the SRB8-11 complex, a regulatory module of the Mediator complex.

Its subcellular location is the nucleus. In terms of biological role, component of the SRB8-11 complex. The SRB8-11 complex is a regulatory module of the Mediator complex which is itself involved in regulation of basal and activated RNA polymerase II-dependent transcription. The SRB8-11 complex may be involved in the transcriptional repression of a subset of genes regulated by Mediator. It may inhibit the association of the Mediator complex with RNA polymerase II to form the holoenzyme complex. The SRB8-11 complex phosphorylates the C-terminal domain (CTD) of the largest subunit of RNA polymerase II. This Candida glabrata (strain ATCC 2001 / BCRC 20586 / JCM 3761 / NBRC 0622 / NRRL Y-65 / CBS 138) (Yeast) protein is RNA polymerase II holoenzyme cyclin-like subunit (SSN8).